The following is a 123-amino-acid chain: Large ribosomal subunit protein bL12 (123 aa).

It belongs to the bacterial ribosomal protein bL12 family. Homodimer. Part of the ribosomal stalk of the 50S ribosomal subunit. Forms a multimeric L10(L12)X complex, where L10 forms an elongated spine to which 2 to 4 L12 dimers bind in a sequential fashion. Binds GTP-bound translation factors.

Functionally, forms part of the ribosomal stalk which helps the ribosome interact with GTP-bound translation factors. Is thus essential for accurate translation. The protein is Large ribosomal subunit protein bL12 of Pseudoalteromonas atlantica (strain T6c / ATCC BAA-1087).